A 74-amino-acid chain; its full sequence is Complement C5a anaphylatoxin (74 aa).

An involved in C5AR1 binding region spans residues 15–44 (YAMLKKCCYDGAYRNDDETCEERAARIKIG). Intrachain disulfides connect cysteine 21–cysteine 47, cysteine 22–cysteine 54, and cysteine 34–cysteine 55. The Anaphylatoxin-like domain maps to 21 to 55 (CCYDGAYRNDDETCEERAARIKIGPKCVKAFKDCC). The interval 72-74 (LGR) is required for 90% of C5a activity; although Arg-74 is not essential.

The protein localises to the secreted. Its function is as follows. Mediator of local inflammatory process released following cleavage by C5 convertase. Acts by binding to its receptor (C5AR1 or C5AR2), activating G protein-coupled receptor signaling and inducing a variety of responses including intracellular calcium release, contraction of smooth muscle, increased vascular permeability, and histamine release from mast cells and basophilic leukocytes. C5a is also a potent chemokine which stimulates the locomotion of polymorphonuclear leukocytes and directs their migration toward sites of inflammation. The protein is Complement C5a anaphylatoxin (C5) of Sus scrofa (Pig).